Here is a 352-residue protein sequence, read N- to C-terminus: uncharacterized protein (352 aa).

A signal peptide spans 1–22 (MIFKKTILIFIISFFFISISFA). The span at 25–47 (SSSSSSSSSSSSSSWSSSESSSS) shows a compositional bias: low complexity. The interval 25–49 (SSSSSSSSSSSSSSWSSSESSSSPA) is disordered. N-linked (GlcNAc...) asparagine glycans are attached at residues Asn76, Asn110, Asn182, Asn212, and Asn223.

The protein localises to the secreted. This is an uncharacterized protein from Dictyostelium discoideum (Social amoeba).